The following is a 365-amino-acid chain: Peptide chain release factor 2 (365 aa).

N5-methylglutamine is present on Gln-252.

It belongs to the prokaryotic/mitochondrial release factor family. Post-translationally, methylated by PrmC. Methylation increases the termination efficiency of RF2.

The protein localises to the cytoplasm. In terms of biological role, peptide chain release factor 2 directs the termination of translation in response to the peptide chain termination codons UGA and UAA. This Escherichia coli O8 (strain IAI1) protein is Peptide chain release factor 2.